The chain runs to 388 residues: FMRFamide neuropeptides (388 aa).

Residues 1–21 (MVAPLLVFLFSLQLCHTTSWA) form the signal peptide. Residues 22-172 (YVGGNSLNSN…SNHQVIRDSR (151 aa)) constitute a propeptide that is removed on maturation. Residues 40–74 (FPAGTSNEVPEDAANGQDDNDDSQLTEPNDNNAPL) are disordered. Positions 64–74 (LTEPNDNNAPL) are enriched in polar residues. Residues F179, F196, F208, F219, F230, F241, F253, F265, F277, F289, F301, F313, F325, F337, F346, F359, and F372 each carry the phenylalanine amide modification. The segment at 360–388 (GRTPTQSSDFMRFGKSLDKSENKTSDLQK) is disordered. Residues 374-388 (KSLDKSENKTSDLQK) show a composition bias toward basic and acidic residues. Positions 375-388 (SLDKSENKTSDLQK) are excised as a propeptide.

It belongs to the FARP (FMRFamide related peptide) family. In the brain, expressed in 2 large cells in the lateral neurons in each optic lobe, 2 slightly bigger cells on both sides of the tritocerebrum, around 14 small cells in the dorsal area, around 13 cells in the subesophageal ganglion, and in the central brain.

It is found in the secreted. The sequence is that of FMRFamide neuropeptides from Musca domestica (House fly).